A 339-amino-acid chain; its full sequence is Outer membrane protein assembly factor BamC (339 aa).

A signal peptide spans 1-19; the sequence is MKFSRQLVLGSLAVLVLSA. A lipid anchor (N-palmitoyl cysteine) is attached at Cys-20. The S-diacylglycerol cysteine moiety is linked to residue Cys-20.

It belongs to the BamC family. Part of the Bam complex.

The protein localises to the cell outer membrane. In terms of biological role, part of the outer membrane protein assembly complex, which is involved in assembly and insertion of beta-barrel proteins into the outer membrane. This Vibrio cholerae serotype O1 (strain ATCC 39315 / El Tor Inaba N16961) protein is Outer membrane protein assembly factor BamC.